The following is a 394-amino-acid chain: Elongation factor Tu (394 aa).

The tr-type G domain occupies 10–204 (KPHINVGTIG…FLDTYIPEPK (195 aa)). Residues 19–26 (GHVDHGKT) are G1. GTP is bound at residue 19-26 (GHVDHGKT). Threonine 26 lines the Mg(2+) pocket. The segment at 60 to 64 (GITIN) is G2. Positions 81–84 (DCPG) are G3. GTP contacts are provided by residues 81 to 85 (DCPGH) and 136 to 139 (NKCD). Residues 136 to 139 (NKCD) form a G4 region. Positions 174–176 (SAL) are G5.

This sequence belongs to the TRAFAC class translation factor GTPase superfamily. Classic translation factor GTPase family. EF-Tu/EF-1A subfamily. In terms of assembly, monomer.

The protein localises to the cytoplasm. It catalyses the reaction GTP + H2O = GDP + phosphate + H(+). GTP hydrolase that promotes the GTP-dependent binding of aminoacyl-tRNA to the A-site of ribosomes during protein biosynthesis. The polypeptide is Elongation factor Tu (Buchnera aphidicola subsp. Schizaphis graminum (strain Sg)).